The primary structure comprises 686 residues: Translation initiation factor IF-2 (686 aa).

A disordered region spans residues 54–105; that stretch reads KPSVADEFEVEEKVVRSKKNSNKKKKKGKGNEDKRQENFAGRQQTQTVETPD. Positions 69 to 81 are enriched in basic residues; the sequence is RSKKNSNKKKKKG. A tr-type G domain is found at 188–357; sequence ERPAVVTIMG…LLISEVEEYK (170 aa). The interval 197–204 is G1; the sequence is GHVDHGKT. 197–204 contacts GTP; sequence GHVDHGKT. The interval 222–226 is G2; sequence GITQH. The segment at 243–246 is G3; that stretch reads DTPG. GTP contacts are provided by residues 243–247 and 297–300; these read DTPGH and NKMD. The interval 297–300 is G4; that stretch reads NKMD. Positions 333–335 are G5; sequence SAI.

It belongs to the TRAFAC class translation factor GTPase superfamily. Classic translation factor GTPase family. IF-2 subfamily.

It is found in the cytoplasm. In terms of biological role, one of the essential components for the initiation of protein synthesis. Protects formylmethionyl-tRNA from spontaneous hydrolysis and promotes its binding to the 30S ribosomal subunits. Also involved in the hydrolysis of GTP during the formation of the 70S ribosomal complex. The chain is Translation initiation factor IF-2 from Bacillus anthracis (strain A0248).